A 209-amino-acid polypeptide reads, in one-letter code: GTP-binding protein RHB1 (209 aa).

Methionine 1 is modified (N-acetylmethionine). The GTP site is built by glycine 28, lysine 29, threonine 30, threonine 31, valine 42, tyrosine 45, threonine 48, aspartate 132, and alanine 172. Threonine 30 lines the Mg(2+) pocket. The Effector region signature appears at tyrosine 45 to phenylalanine 53. Threonine 48 contacts Mg(2+). Cysteine 206 carries the post-translational modification Cysteine methyl ester. A lipid anchor (S-farnesyl cysteine) is attached at cysteine 206. A propeptide spans serine 207–methionine 209 (removed in mature form).

The protein belongs to the small GTPase superfamily. Rheb family. Interacts with BTN2.

The protein resides in the cell membrane. The catalysed reaction is GTP + H2O = GDP + phosphate + H(+). Its function is as follows. Binds GTP and exhibits intrinsic GTPase activity. Involved in the regulation of arginine and lysine uptake. Acts through the CAN1 permease. The chain is GTP-binding protein RHB1 (RHB1) from Saccharomyces cerevisiae (strain ATCC 204508 / S288c) (Baker's yeast).